A 369-amino-acid polypeptide reads, in one-letter code: Protein RIC-3 (369 aa).

Positions 1–28 (MAYSTVQRVALASGLVLALSLLLPKAFL) are cleaved as a signal peptide. Residues 29 to 95 (SRGKRQEPPP…AGGGGSGRGL (67 aa)) are Lumenal-facing. Residues 30 to 67 (RGKRQEPPPTPEGKLGRFPPMMHHHQAPSDGQTPGARF) are disordered. The chain crosses the membrane as a helical span at residues 96–116 (MGQIIPIYGFGIFLYILYILF). At 117-369 (KLSKGKTTAE…LRKRNPQGLE (253 aa)) the chain is on the cytoplasmic side. A coiled-coil region spans residues 140-169 (RKITSFELAQLQEKLKETEAAMEKLINRVG). Lysine 202 is modified (N6-acetyllysine; alternate). Lysine 202 is covalently cross-linked (Glycyl lysine isopeptide (Lys-Gly) (interchain with G-Cter in ubiquitin); alternate). Disordered stretches follow at residues 272-295 (ESDHLGWESLPTDPRAQEDNSVTS) and 316-369 (LAEN…QGLE). The segment covering 332-346 (ETTKEEWSQDFKDEG) has biased composition (basic and acidic residues). Residues 360–369 (LRKRNPQGLE) are compositionally biased toward basic residues.

Belongs to the ric-3 family. As to quaternary structure, monomer and homodimer. Interacts with CHRNA7, CHRNA3, CHRNA4, CHRNB2, CHRNB4 and HTR3A. As to expression, broadly expressed, with high levels in muscle, brain, heart, pancreas and testis. In the central nervous system, highest levels are detected in the cerebellum and pituitary gland. Over-expressed in brains from patients with bipolar disease or schizophrenia. Isoform 5 is predominantly expressed in the brain.

The protein localises to the endoplasmic reticulum membrane. It is found in the golgi apparatus membrane. Its function is as follows. Molecular chaperone which facilitates proper subunit assembly and surface trafficking of alpha-7 (CHRNA7) and alpha-8 (CHRNA8) nicotinic acetylcholine receptors. May also promote functional expression of homomeric serotoninergic 5-HT3 receptors, and of heteromeric acetylcholine receptors alpha-3/beta-2, alpha-3/beta-4, alpha-4/beta-2 and alpha-4/beta-4. In Homo sapiens (Human), this protein is Protein RIC-3 (RIC3).